The chain runs to 775 residues: Chloride channel protein CLC-a (775 aa).

Positions 1–28 (MDEDGNLQISNSNYNGEEEGEDPENNTL) are disordered. 12 consecutive transmembrane segments (helical) span residues 88 to 108 (TLACLVGLFTGLIATLINLAV), 131 to 151 (GLMVFTGANLGLTLVATVLVV), 178 to 198 (FGFTTMMVKIVGSIGAVAAGL), 206 to 226 (LVHIGSCIASLLGQGGPDNHR), 248 to 268 (GSASGVCAAFRSPVGGVLFAL), 278 to 298 (ALLWRTFFSTAVVVVVLRAFI), 328 to 348 (AADIIPVTLIGVFGGILGSLY), 371 to 391 (VLLSLGVSLFTSVCLFGLPFL), 453 to 473 (MVSLWIFFGLYCILGLITFGI), 478 to 498 (GLFLPIILMGSAYGRMLGTAM), 510 to 530 (AVLGAASLMAGSMRMTVSLCV), and 531 to 551 (IFLELTNNLLLLPITMFVLLI). CBS domains are found at residues 595–658 (AKPP…FLNE) and 703–768 (TNTT…HLDK). Residues 730 to 750 (HLLVVPKIQASGMSPVIGILT) traverse the membrane as a helical segment.

Belongs to the chloride channel (TC 2.A.49) family. In terms of assembly, homodimer. Interacts with PP2A5. As to expression, broadly expressed in the plant.

The protein localises to the membrane. Its function is as follows. Voltage-gated chloride channel that could play a role in the regulation of nitrate content. This chain is Chloride channel protein CLC-a (CLC-A), found in Arabidopsis thaliana (Mouse-ear cress).